A 311-amino-acid chain; its full sequence is 3-dehydro-scyllo-inosose hydrolase (311 aa).

The Zn(2+) site is built by Glu35, His37, Asp46, His117, and Glu173.

The protein belongs to the creatininase superfamily. As to quaternary structure, homotrimer. Zn(2+) serves as cofactor.

The catalysed reaction is 3-dehydro-scyllo-inosose + H2O = 5-dehydro-L-gluconate + H(+). It participates in polyol metabolism; myo-inositol metabolism. Catalyzes the ring-opening hydrolysis of 3-dehydro-scyllo-inosose (diketo-inositol) to 5-dehydro-L-gluconate, and thus probably functions in a myo-inositol degradation pathway together with IolG, IolM and IolO. The sequence is that of 3-dehydro-scyllo-inosose hydrolase from Thermotoga maritima (strain ATCC 43589 / DSM 3109 / JCM 10099 / NBRC 100826 / MSB8).